A 430-amino-acid polypeptide reads, in one-letter code: Probable glucose-6-phosphate isomerase (430 aa).

E271 (proton donor) is an active-site residue. Active-site residues include H292, H303, and K403.

It belongs to the GPI family.

The protein resides in the cytoplasm. The catalysed reaction is alpha-D-glucose 6-phosphate = beta-D-fructose 6-phosphate. It participates in carbohydrate biosynthesis; gluconeogenesis. The protein operates within carbohydrate degradation; glycolysis; D-glyceraldehyde 3-phosphate and glycerone phosphate from D-glucose: step 2/4. Its function is as follows. Catalyzes the reversible isomerization of glucose-6-phosphate to fructose-6-phosphate. This Haloquadratum walsbyi (strain DSM 16790 / HBSQ001) protein is Probable glucose-6-phosphate isomerase.